The following is a 199-amino-acid chain: Adenosylcobinamide-GDP ribazoletransferase (199 aa).

The next 2 helical transmembrane spans lie at 2–22 (LAGG…VFAV) and 61–81 (IAAV…VAAL).

This sequence belongs to the CobS family. Mg(2+) serves as cofactor.

It localises to the cell membrane. It catalyses the reaction alpha-ribazole + adenosylcob(III)inamide-GDP = adenosylcob(III)alamin + GMP + H(+). It carries out the reaction alpha-ribazole 5'-phosphate + adenosylcob(III)inamide-GDP = adenosylcob(III)alamin 5'-phosphate + GMP + H(+). The protein operates within cofactor biosynthesis; adenosylcobalamin biosynthesis; adenosylcobalamin from cob(II)yrinate a,c-diamide: step 7/7. Its function is as follows. Joins adenosylcobinamide-GDP and alpha-ribazole to generate adenosylcobalamin (Ado-cobalamin). Also synthesizes adenosylcobalamin 5'-phosphate from adenosylcobinamide-GDP and alpha-ribazole 5'-phosphate. The protein is Adenosylcobinamide-GDP ribazoletransferase of Halobacterium salinarum (strain ATCC 700922 / JCM 11081 / NRC-1) (Halobacterium halobium).